Reading from the N-terminus, the 530-residue chain is Probable ATP-binding protein YbiT (530 aa).

ABC transporter domains are found at residues 2–252 (LVSS…ERLL) and 320–526 (LEVE…YLRS). ATP-binding positions include 34-41 (GANGSGKS) and 352-359 (GTNGVGKS).

Belongs to the ABC transporter superfamily. ABCF family. YbiT subfamily.

This Escherichia coli O157:H7 protein is Probable ATP-binding protein YbiT (ybiT).